A 611-amino-acid chain; its full sequence is Guanylate-binding protein 6 (611 aa).

Residues Met-1–Cys-308 are GTPase domain (Globular). Residues Ser-33–Lys-275 enclose the GB1/RHD3-type G domain. GTP is bound by residues Gly-43–Ser-50, Leu-65–Ser-67, and Asp-95–Leu-99.

This sequence belongs to the TRAFAC class dynamin-like GTPase superfamily. GB1/RHD3 GTPase family. GB1 subfamily.

The protein resides in the cytoplasmic vesicle. The enzyme catalyses GTP + H2O = GDP + phosphate + H(+). In terms of biological role, interferon (IFN)-inducible GTPase that plays important roles in innate immunity against a diverse range of bacterial, viral and protozoan pathogens, such as bacterial pathogens Listeria monocytogenes and Mycobacterium bovis BCG as well as the protozoan pathogen Toxoplasma gondii. Confers protection to several pathogens, including the bacterial pathogens Listeria monocytogenes and Mycobacterium bovis BCG as well as the protozoan pathogen Toxoplasma gondii. This chain is Guanylate-binding protein 6 (Gbp6), found in Mus musculus (Mouse).